We begin with the raw amino-acid sequence, 860 residues long: Protein argonaute-2 (860 aa).

Positions 1 to 30 (MYSGAGPALAPPAPPPPPIQGYAFKPPPRP) are disordered. Tyr-2 is modified (3'-nitrotyrosine). A compositionally biased stretch (pro residues) spans 9–30 (LAPPAPPPPPIQGYAFKPPPRP). In terms of domain architecture, PAZ spans 230-349 (PVIEFVCEVL…LPLEVCNIVA (120 aa)). The tract at residues 312–317 (YFKDRH) is interaction with guide RNA. Ser-388 bears the Phosphoserine mark. In terms of domain architecture, Piwi spans 518 to 819 (LVVVILPGKT…VAFRARYHLV (302 aa)). The tract at residues 525–567 (GKTPVYAEVKRVGDTVLGMATQCVQMKNVQRTTPQTLSNLWLK) is interaction with guide RNA. Positions 588-591 (FQQP) are interaction with GW182 family members. Residue Asp-598 coordinates a divalent metal cation. The interaction with GW182 family members stretch occupies residues 651–661 (LIQFYKSTRFK). Asp-670 lines the a divalent metal cation pocket. A 4-hydroxyproline modification is found at Pro-701. Interaction with guide RNA regions lie at residues 710–711 (KR), 754–762 (HAGIQGTSR), and 791–813 (YVRC…VAFR). His-808 serves as a coordination point for a divalent metal cation. Phosphoserine is present on residues Ser-825, Ser-829, Ser-832, and Ser-835.

It belongs to the argonaute family. Ago subfamily. In terms of assembly, interacts with DICER1 through its Piwi domain and with TARBP2 during assembly of the RNA-induced silencing complex (RISC). Together, DICER1, AGO2 and TARBP2 constitute the trimeric RISC loading complex (RLC), or micro-RNA (miRNA) loading complex (miRLC). Within the RLC/miRLC, DICER1 and TARBP2 are required to process precursor miRNAs (pre-miRNAs) to mature miRNAs and then load them onto AGO2. AGO2 bound to the mature miRNA constitutes the minimal RISC and may subsequently dissociate from DICER1 and TARBP2. Note however that the term RISC has also been used to describe the trimeric RLC/miRLC. The formation of RISC complexes containing siRNAs rather than miRNAs appears to occur independently of DICER1. Interacts with AGO1. Also interacts with DDB1, DDX5, DDX6, DDX20, DHX30, DHX36, DDX47, DHX9, ELAVL, FXR1, GEMIN4, HNRNPF, IGF2BP1, ILF3, IMP8, MATR3, PABPC1, PRMT5, P4HA1, P4HB, RBM4, SART3, TNRC6A, TNRC6B, UPF1 and YBX1. Interacts with the P-body components DCP1A and XRN1. Associates with polysomes and messenger ribonucleoproteins (mNRPs). Interacts with RBM4; the interaction is modulated under stress-induced conditions, occurs under both cell proliferation and differentiation conditions and in an RNA- and phosphorylation-independent manner. Interacts with LIMD1, WTIP and AJUBA. Interacts with TRIM71; the interaction increases in presence of RNA. Interacts with APOBEC3G in an RNA-dependent manner. Interacts with APOBEC3A, APOBEC3C, APOBEC3F and APOBEC3H. Interacts with DICER1, TARBP2, EIF6, MOV10 and RPL7A (60S ribosome subunit); they form a large RNA-induced silencing complex (RISC). Interacts with FMR1. Interacts with ZFP36. Interacts with RC3H1; the interaction is RNA independent. Found in a complex composed of AGO2, CHD7 and ARB2A. Interacts with SND1 and SYT11. Interacts with CLNK. Interacts with GARRE1. Interacts with GRB2; this interaction is important for the formation of a ternary complex containing GRB2, AGO2 and DICER1. Mg(2+) is required as a cofactor. Mn(2+) serves as cofactor. Hydroxylated. 4-hydroxylation appears to enhance protein stability but is not required for miRNA-binding or endonuclease activity. Post-translationally, ubiquitinated on surface-exposed lysines by a SCF-like E3 ubiquitin-protein ligase complex containing ZSWIM8 during target-directed microRNA degradation (TDMD), a process that mediates degradation of microRNAs (miRNAs). Ubiquitination by the SCF-like E3 ubiquitin-protein ligase complex containing ZSWIM8 leads to its subsequent degradation, thereby exposing miRNAs for degradation. ZSWIM8 recognizes and binds AGO2 when it is engaged with a TDMD target. In terms of processing, phosphorylation at Ser-388 by AKT3; leads to up-regulate translational repression of microRNA target and down-regulate endonucleolytic cleavage. A phosphorylation cycle of C-terminal serine cluster (Ser-825-Ser-835) regulates the release of target mRNAs. Target-binding leads to phosphorylation of these residues by CSNK1A1, which reduces the affinity of AGO2 for mRNA and enables target release. The ANKRD52-PPP6C phosphatase complex dephosphorylates the residues, which primes AGO2 for binding a new target.

The protein localises to the cytoplasm. Its subcellular location is the P-body. It localises to the nucleus. The catalysed reaction is Endonucleolytic cleavage to 5'-phosphomonoester.. Its function is as follows. Required for RNA-mediated gene silencing (RNAi) by the RNA-induced silencing complex (RISC). The 'minimal RISC' appears to include AGO2 bound to a short guide RNA such as a microRNA (miRNA) or short interfering RNA (siRNA). These guide RNAs direct RISC to complementary mRNAs that are targets for RISC-mediated gene silencing. The precise mechanism of gene silencing depends on the degree of complementarity between the miRNA or siRNA and its target. Binding of RISC to a perfectly complementary mRNA generally results in silencing due to endonucleolytic cleavage of the mRNA specifically by AGO2. Binding of RISC to a partially complementary mRNA results in silencing through inhibition of translation, and this is independent of endonuclease activity. May inhibit translation initiation by binding to the 7-methylguanosine cap, thereby preventing the recruitment of the translation initiation factor eIF4-E. May also inhibit translation initiation via interaction with EIF6, which itself binds to the 60S ribosomal subunit and prevents its association with the 40S ribosomal subunit. The inhibition of translational initiation leads to the accumulation of the affected mRNA in cytoplasmic processing bodies (P-bodies), where mRNA degradation may subsequently occur. In some cases RISC-mediated translational repression is also observed for miRNAs that perfectly match the 3' untranslated region (3'-UTR). Can also up-regulate the translation of specific mRNAs under certain growth conditions. Binds to the AU element of the 3'-UTR of the TNF (TNF-alpha) mRNA and up-regulates translation under conditions of serum starvation. Also required for transcriptional gene silencing (TGS), in which short RNAs known as antigene RNAs or agRNAs direct the transcriptional repression of complementary promoter regions. The chain is Protein argonaute-2 (AGO2) from Bos taurus (Bovine).